A 407-amino-acid chain; its full sequence is MRIRRRALVFATMSAVLCTAGFMPSAGEAAADNGAGEETKSYAETYRLTADDVANINALNESAPAASSAGPSFRAPDSDDRVTPPAEPLDRMPDPYRPSYGRAETVVNNYIRKWQQVYSHRDGRKQQMTEEQREWLSYGCVGVTWVNSGQYPTNRLAFASFDEDRFKNELKNGRPRSGETRAEFEGRVAKESFDEEKGFQRAREVASVMNRALENAHDESAYLDNLKKELANGNDALRNEDARSPFYSALRNTPSFKERNGGNHDPSRMKAVIYSKHFWSGQDRSSSADKRKYGDPDAFRPAPGTGLVDMSRDRNIPRSPTSPGEGFVNFDYGWFGAQTEADADKTVWTHGNHYHAPNGSLGAMHVYESKFRNWSEGYSDFDRGAYVITFIPKSWNTAPDKVKQGWP.

A signal peptide spans 1–31 (MRIRRRALVFATMSAVLCTAGFMPSAGEAAA). Residues 32 to 76 (DNGAGEETKSYAETYRLTADDVANINALNESAPAASSAGPSFRAP) constitute a propeptide that is removed on maturation. Residues 62 to 72 (SAPAASSAGPS) are compositionally biased toward low complexity. Residues 62-98 (SAPAASSAGPSFRAPDSDDRVTPPAEPLDRMPDPYRP) form a disordered region. Over residues 76-94 (PDSDDRVTPPAEPLDRMPD) the composition is skewed to basic and acidic residues. Residue Cys140 is part of the active site. Residues 282-322 (QDRSSSADKRKYGDPDAFRPAPGTGLVDMSRDRNIPRSPTS) form a disordered region. The span at 286–298 (SSADKRKYGDPDA) shows a compositional bias: basic and acidic residues. Catalysis depends on residues Asp331 and His350.

It belongs to the bacterial TGase family.

It catalyses the reaction L-glutaminyl-[protein] + L-lysyl-[protein] = [protein]-L-lysyl-N(6)-5-L-glutamyl-[protein] + NH4(+). Functionally, catalyzes the cross-linking of proteins and the conjugation of polyamines to proteins. This chain is Protein-glutamine gamma-glutamyltransferase, found in Streptomyces mobaraensis (Streptoverticillium mobaraense).